The chain runs to 210 residues: MDLHNIREDYSKRELSEADCADNPIEQFERWLDEAVRAEVNEPTAVNVAAVDGRGRPNSRMVLLKEVNSEGFVFFTNYHSRKGRSLELNPFAAMTFFWPELERQVRVEGRVGRLAEKLSDEYFESRPYQSRLGAWASAQSEVIPNKAVLVAKAAAVGLKHPLHVPRPPHWGGYIVIPDLIEFWQGRPSRLHDRIQYRLLDGGWIRERLSP.

Substrate-binding positions include Arg-7–Tyr-10 and Lys-65. FMN-binding positions include Arg-60–Lys-65, Phe-75–Thr-76, Arg-81, Lys-82, and Gln-104. Substrate contacts are provided by Tyr-122, Arg-126, and Ser-130. Residues Gln-139–Ser-140 and Trp-183 each bind FMN. Substrate is bound at residue Arg-189–His-191. Arg-193 provides a ligand contact to FMN.

This sequence belongs to the pyridoxamine 5'-phosphate oxidase family. Homodimer. It depends on FMN as a cofactor.

It carries out the reaction pyridoxamine 5'-phosphate + O2 + H2O = pyridoxal 5'-phosphate + H2O2 + NH4(+). The enzyme catalyses pyridoxine 5'-phosphate + O2 = pyridoxal 5'-phosphate + H2O2. It functions in the pathway cofactor metabolism; pyridoxal 5'-phosphate salvage; pyridoxal 5'-phosphate from pyridoxamine 5'-phosphate: step 1/1. Its pathway is cofactor metabolism; pyridoxal 5'-phosphate salvage; pyridoxal 5'-phosphate from pyridoxine 5'-phosphate: step 1/1. Functionally, catalyzes the oxidation of either pyridoxine 5'-phosphate (PNP) or pyridoxamine 5'-phosphate (PMP) into pyridoxal 5'-phosphate (PLP). The polypeptide is Pyridoxine/pyridoxamine 5'-phosphate oxidase (Neisseria gonorrhoeae (strain ATCC 700825 / FA 1090)).